The sequence spans 87 residues: Apolipoprotein C-I (87 aa).

An N-terminal signal peptide occupies residues 1 to 26; the sequence is MRFILSLPVLAVVLAMVLEGPAPAQA.

Belongs to the apolipoprotein C1 family.

The protein localises to the secreted. In terms of biological role, inhibitor of lipoprotein binding to the low density lipoprotein (LDL) receptor, LDL receptor-related protein, and very low density lipoprotein (VLDL) receptor. Associates with high density lipoproteins (HDL) and the triacylglycerol-rich lipoproteins in the plasma and makes up about 10% of the protein of the VLDL and 2% of that of HDL. Appears to interfere directly with fatty acid uptake and is also the major plasma inhibitor of cholesteryl ester transfer protein (CETP). Binds free fatty acids and reduces their intracellular esterification. Modulates the interaction of APOE with beta-migrating VLDL and inhibits binding of beta-VLDL to the LDL receptor-related protein. The chain is Apolipoprotein C-I (APOC1) from Pteropus alecto (Black flying fox).